A 401-amino-acid polypeptide reads, in one-letter code: Chalcone synthase 1 (401 aa).

Residue C168 is part of the active site.

Belongs to the thiolase-like superfamily. Chalcone/stilbene synthases family.

The enzyme catalyses (E)-4-coumaroyl-CoA + 3 malonyl-CoA + 3 H(+) = 2',4,4',6'-tetrahydroxychalcone + 3 CO2 + 4 CoA. Its pathway is secondary metabolite biosynthesis; flavonoid biosynthesis. Functionally, the primary product of this enzyme is 4,2',4',6'-tetrahydroxychalcone (also termed naringenin-chalcone or chalcone) which can under specific conditions spontaneously isomerize into naringenin. The polypeptide is Chalcone synthase 1 (CHS1) (Sorghum bicolor (Sorghum)).